A 64-amino-acid polypeptide reads, in one-letter code: Large ribosomal subunit protein bL35 (64 aa).

It belongs to the bacterial ribosomal protein bL35 family.

The chain is Large ribosomal subunit protein bL35 from Amoebophilus asiaticus (strain 5a2).